The following is a 263-amino-acid chain: 4-hydroxy-2-oxo-heptane-1,7-dioate aldolase (263 aa).

The active-site Proton acceptor is H45. Q147 is a binding site for substrate. E149 is a binding site for a divalent metal cation. The substrate site is built by A174 and D175. D175 provides a ligand contact to a divalent metal cation.

Belongs to the HpcH/HpaI aldolase family. As to quaternary structure, homohexamer; trimer of dimers. A divalent metal cation is required as a cofactor.

The enzyme catalyses 4-hydroxy-2-oxoheptanedioate = succinate semialdehyde + pyruvate. The protein operates within aromatic compound metabolism; 4-hydroxyphenylacetate degradation; pyruvate and succinate semialdehyde from 4-hydroxyphenylacetate: step 7/7. Catalyzes the reversible retro-aldol cleavage of 4-hydroxy-2-ketoheptane-1,7-dioate (HKHD) to pyruvate and succinic semialdehyde. This chain is 4-hydroxy-2-oxo-heptane-1,7-dioate aldolase, found in Salmonella newport (strain SL254).